The primary structure comprises 148 residues: Cystatin-D (148 aa).

Positions 1–33 (MASLLSPSMPVLAAVALTLTLAVIPEASTNAEA) are cleaved as a signal peptide. Residues 36 to 148 (VVLGGVEPAD…SMTNFNCYNF (113 aa)) enclose the Cystatin kininogen-type domain. 2 disulfides stabilise this stretch: Cys-101–Cys-111 and Cys-125–Cys-145.

This sequence belongs to the cystatin family. In terms of tissue distribution, in cartilage, expressed mainly in mature chondrocytes including prehypertrophic and hypertrophic cells (at protein level). Expressed exclusively in cartilage.

It is found in the cytoplasm. It localises to the cytosol. Functionally, may play a role in the last steps of the chondrocyte differentiation pathway as an inducer of maturation. Induces chondrocyte calcification during endochondral ossification by playing a role in the transcriptional inhibition of ENPP1, a generator of pyrophosphate which inhibits calcification. Possibly impairs the binding of a transcription factor to the ENPP1 promoter. Unlike other cystatins, does not have thiol protease inhibitor activity. The protein is Cystatin-D of Mus musculus (Mouse).